Here is a 288-residue protein sequence, read N- to C-terminus: Large ribosomal subunit protein uL2 (288 aa).

Disordered regions lie at residues 1 to 46 (MAIH…RNVY) and 226 to 288 (MVMN…RGKK). Residues 235–248 (NGGGQGKSKGGGGR) show a composition bias toward gly residues. Over residues 279–288 (HNGRKPRGKK) the composition is skewed to basic residues.

The protein belongs to the universal ribosomal protein uL2 family. In terms of assembly, part of the 50S ribosomal subunit. Forms a bridge to the 30S subunit in the 70S ribosome.

One of the primary rRNA binding proteins. Required for association of the 30S and 50S subunits to form the 70S ribosome, for tRNA binding and peptide bond formation. It has been suggested to have peptidyltransferase activity; this is somewhat controversial. Makes several contacts with the 16S rRNA in the 70S ribosome. The protein is Large ribosomal subunit protein uL2 of Opitutus terrae (strain DSM 11246 / JCM 15787 / PB90-1).